Reading from the N-terminus, the 147-residue chain is Hemoglobin subunit epsilon-M (147 aa).

A Globin domain is found at 3-147; sequence HFTPEDKTNI…VSSALGHKYH (145 aa). Ser14 and Ser51 each carry phosphoserine. Heme b is bound by residues His64 and His93.

The protein belongs to the globin family. Red blood cells.

In terms of biological role, hemoglobin epsilon chain is a beta-type chain found in early embryos. In Didelphis virginiana (North American opossum), this protein is Hemoglobin subunit epsilon-M (HBE1).